The following is a 74-amino-acid chain: Small heat shock protein hspG10 (74 aa).

In terms of domain architecture, sHSP spans 31-74 (KTIIDILPSMDVTMTNDKLIIETELAGISKDHIEIDIKDSILTI).

Belongs to the small heat shock protein (HSP20) family.

The polypeptide is Small heat shock protein hspG10 (hspG10) (Dictyostelium discoideum (Social amoeba)).